The primary structure comprises 121 residues: Ribosome-binding factor A (121 aa).

This sequence belongs to the RbfA family. Monomer. Binds 30S ribosomal subunits, but not 50S ribosomal subunits or 70S ribosomes.

It is found in the cytoplasm. Its function is as follows. One of several proteins that assist in the late maturation steps of the functional core of the 30S ribosomal subunit. Associates with free 30S ribosomal subunits (but not with 30S subunits that are part of 70S ribosomes or polysomes). Required for efficient processing of 16S rRNA. May interact with the 5'-terminal helix region of 16S rRNA. The sequence is that of Ribosome-binding factor A from Agathobacter rectalis (strain ATCC 33656 / DSM 3377 / JCM 17463 / KCTC 5835 / VPI 0990) (Eubacterium rectale).